Consider the following 157-residue polypeptide: DNA gyrase inhibitor (157 aa).

It belongs to the DNA gyrase inhibitor family. As to quaternary structure, interacts with DNA gyrase.

It localises to the cytoplasm. Inhibits the supercoiling activity of DNA gyrase. Acts by inhibiting DNA gyrase at an early step, prior to (or at the step of) binding of DNA by the gyrase. It protects cells against toxins that target DNA gyrase, by inhibiting activity of these toxins and reducing the formation of lethal double-strand breaks in the cell. The protein is DNA gyrase inhibitor of Yersinia enterocolitica serotype O:8 / biotype 1B (strain NCTC 13174 / 8081).